Reading from the N-terminus, the 235-residue chain is Ubiquinone biosynthesis O-methyltransferase (235 aa).

Positions 39, 59, 80, and 124 each coordinate S-adenosyl-L-methionine.

The protein belongs to the methyltransferase superfamily. UbiG/COQ3 family.

The enzyme catalyses a 3-demethylubiquinol + S-adenosyl-L-methionine = a ubiquinol + S-adenosyl-L-homocysteine + H(+). The catalysed reaction is a 3-(all-trans-polyprenyl)benzene-1,2-diol + S-adenosyl-L-methionine = a 2-methoxy-6-(all-trans-polyprenyl)phenol + S-adenosyl-L-homocysteine + H(+). Its pathway is cofactor biosynthesis; ubiquinone biosynthesis. O-methyltransferase that catalyzes the 2 O-methylation steps in the ubiquinone biosynthetic pathway. The chain is Ubiquinone biosynthesis O-methyltransferase from Photobacterium profundum (strain SS9).